The sequence spans 86 residues: Large ribosomal subunit protein bL31B (86 aa).

It belongs to the bacterial ribosomal protein bL31 family. Type B subfamily. Part of the 50S ribosomal subunit.

This Saccharopolyspora erythraea (strain ATCC 11635 / DSM 40517 / JCM 4748 / NBRC 13426 / NCIMB 8594 / NRRL 2338) protein is Large ribosomal subunit protein bL31B.